A 357-amino-acid chain; its full sequence is MSIEEPSTQHIAQPQKYVGFDTITTQIENRLLKRGFQFNIMVVGRSGLGKSTLVNTLFSSKLTTSQGRKSPSEPIEKTTEIKVASHSLLENNVRLNINVIDTPGFGDQINNEKCWEPLVKYVKEQHSQYLRKELTAQRDKFLADTRVHCILYFIPPNGQKLKQLDVQALKKLSEIANVVPIIAKSDSLTLDERSEFKKLLQSEFMKYNFNIYPYDSEDLYEEERQLNEDIKSLIPFAIAGSETEIEINGEMVRGRKTKWGAINIEDVSQCEFVFLRDFLTRTHLQDLIETTALTHYETFRSKQLIALKENASNPNRQSQLQKDQGQTSQQSNQDLKNTSGVPNAPMFQSTTGTAAAR.

One can recognise a Septin-type G domain in the interval 34-306 (RGFQFNIMVV…ETFRSKQLIA (273 aa)). Positions 44–51 (GRSGLGKS) are G1 motif. GTP is bound by residues 44–51 (GRSGLGKS), T78, G104, 184–192 (KSDSLTLDE), G240, and R255. The interval 101–104 (DTPG) is G3 motif. The G4 motif stretch occupies residues 183–186 (AKSD). Positions 310–357 (NASNPNRQSQLQKDQGQTSQQSNQDLKNTSGVPNAPMFQSTTGTAAAR) are disordered.

The protein belongs to the TRAFAC class TrmE-Era-EngA-EngB-Septin-like GTPase superfamily. Septin GTPase family.

It localises to the bud neck. Plays a role in the cell cycle. Involved in the formation of the ring of filaments in the neck region at the mother-bud junction during mitosis. In Candida albicans (strain SC5314 / ATCC MYA-2876) (Yeast), this protein is Cell division control protein 10 (CDC10).